The sequence spans 141 residues: Hemoglobin subunit alpha-D (141 aa).

In terms of domain architecture, Globin spans 1–141; sequence VLTAEDRRLL…VADVLCEKYR (141 aa). Heme b-binding residues include glutamine 58 and histidine 87.

The protein belongs to the globin family. In terms of assembly, heterotetramer of two alpha chains and two beta chains. In terms of tissue distribution, red blood cells.

Involved in oxygen transport from the lung to the various peripheral tissues. This chain is Hemoglobin subunit alpha-D, found in Drymarchon melanurus erebennus (Texas indigo snake).